Reading from the N-terminus, the 548-residue chain is Eukaryotic translation initiation factor 3 subunit D (548 aa).

An N6-acetyllysine modification is found at K53. Residue S161 is modified to Phosphoserine. Residues D285–P299 form an RNA gate region. A disordered region spans residues P523–T548. Phosphoserine occurs at positions 528 and 529. Positions S529–T548 are enriched in acidic residues.

Belongs to the eIF-3 subunit D family. In terms of assembly, component of the eukaryotic translation initiation factor 3 (eIF-3) complex, which is composed of 13 subunits: EIF3A, EIF3B, EIF3C, EIF3D, EIF3E, EIF3F, EIF3G, EIF3H, EIF3I, EIF3J, EIF3K, EIF3L and EIF3M. The eIF-3 complex appears to include 3 stable modules: module A is composed of EIF3A, EIF3B, EIF3G and EIF3I; module B is composed of EIF3F, EIF3H, and EIF3M; and module C is composed of EIF3C, EIF3D, EIF3E, EIF3K and EIF3L. EIF3C of module C binds EIF3B of module A and EIF3H of module B, thereby linking the three modules. EIF3J is a labile subunit that binds to the eIF-3 complex via EIF3B. The eIF-3 complex interacts with RPS6KB1 under conditions of nutrient depletion. Mitogenic stimulation leads to binding and activation of a complex composed of MTOR and RPTOR, leading to phosphorylation and release of RPS6KB1 and binding of EIF4B to eIF-3. (Microbial infection) Interacts with Norwalk virus VPg protein.

It is found in the cytoplasm. Its function is as follows. mRNA cap-binding component of the eukaryotic translation initiation factor 3 (eIF-3) complex, a complex required for several steps in the initiation of protein synthesis of a specialized repertoire of mRNAs. The eIF-3 complex associates with the 40S ribosome and facilitates the recruitment of eIF-1, eIF-1A, eIF-2:GTP:methionyl-tRNAi and eIF-5 to form the 43S pre-initiation complex (43S PIC). The eIF-3 complex stimulates mRNA recruitment to the 43S PIC and scanning of the mRNA for AUG recognition. The eIF-3 complex is also required for disassembly and recycling of post-termination ribosomal complexes and subsequently prevents premature joining of the 40S and 60S ribosomal subunits prior to initiation. The eIF-3 complex specifically targets and initiates translation of a subset of mRNAs involved in cell proliferation, including cell cycling, differentiation and apoptosis, and uses different modes of RNA stem-loop binding to exert either translational activation or repression. In the eIF-3 complex, EIF3D specifically recognizes and binds the 7-methylguanosine cap of a subset of mRNAs. Functionally, (Microbial infection) In case of FCV infection, plays a role in the ribosomal termination-reinitiation event leading to the translation of VP2. The sequence is that of Eukaryotic translation initiation factor 3 subunit D from Homo sapiens (Human).